Reading from the N-terminus, the 246-residue chain is 2-C-methyl-D-erythritol 4-phosphate cytidylyltransferase (246 aa).

The protein belongs to the IspD/TarI cytidylyltransferase family. IspD subfamily.

The catalysed reaction is 2-C-methyl-D-erythritol 4-phosphate + CTP + H(+) = 4-CDP-2-C-methyl-D-erythritol + diphosphate. The protein operates within isoprenoid biosynthesis; isopentenyl diphosphate biosynthesis via DXP pathway; isopentenyl diphosphate from 1-deoxy-D-xylulose 5-phosphate: step 2/6. Its function is as follows. Catalyzes the formation of 4-diphosphocytidyl-2-C-methyl-D-erythritol from CTP and 2-C-methyl-D-erythritol 4-phosphate (MEP). This chain is 2-C-methyl-D-erythritol 4-phosphate cytidylyltransferase, found in Clostridium tetani (strain Massachusetts / E88).